The chain runs to 377 residues: 1-deoxy-D-xylulose 5-phosphate reductoisomerase (377 aa).

NADPH is bound by residues T20, G21, I23, N46, and N115. K116 is a 1-deoxy-D-xylulose 5-phosphate binding site. Residue E117 coordinates NADPH. A Mn(2+)-binding site is contributed by D141. 4 residues coordinate 1-deoxy-D-xylulose 5-phosphate: S142, E143, S166, and H189. Mn(2+) is bound at residue E143. G195 is an NADPH binding site. 1-deoxy-D-xylulose 5-phosphate-binding residues include S202, N207, K208, and E211. E211 is a Mn(2+) binding site.

It belongs to the DXR family. Mg(2+) serves as cofactor. The cofactor is Mn(2+).

The enzyme catalyses 2-C-methyl-D-erythritol 4-phosphate + NADP(+) = 1-deoxy-D-xylulose 5-phosphate + NADPH + H(+). Its pathway is isoprenoid biosynthesis; isopentenyl diphosphate biosynthesis via DXP pathway; isopentenyl diphosphate from 1-deoxy-D-xylulose 5-phosphate: step 1/6. In terms of biological role, catalyzes the NADPH-dependent rearrangement and reduction of 1-deoxy-D-xylulose-5-phosphate (DXP) to 2-C-methyl-D-erythritol 4-phosphate (MEP). In Malacoplasma penetrans (strain HF-2) (Mycoplasma penetrans), this protein is 1-deoxy-D-xylulose 5-phosphate reductoisomerase.